The chain runs to 91 residues: MEVVPVQIAAGTTSTFILPVIIAFVVCFVSIILIVWISEFIVYTSVLVLTLLLYLLLWLLLTTPLQFFLLTLLVCYCPALYIHYYIVTTQQ.

It belongs to the papillomaviridae E5A protein family.

The protein is Probable protein E5A of Human papillomavirus type 6b.